We begin with the raw amino-acid sequence, 1006 residues long: Unconventional myosin-Id (1006 aa).

Position 2 is an N-acetylalanine (alanine 2). Positions 9–695 (FGKADFVLMD…TLFTLEELRA (687 aa)) constitute a Myosin motor domain. 102 to 109 (GESGAGKT) contacts ATP. Serine 200 is modified (phosphoserine). Tyrosine 536 is modified (phosphotyrosine). An actin-binding region spans residues 572 to 594 (MIALVDNLASKEPYYVRCIKPND). 2 consecutive IQ domains span residues 699–719 (VRIV…MRYK) and 721–741 (TKAA…SYIH). The TH1 domain occupies 812 to 1005 (GQRADLGLQR…RSGFILSVPG (194 aa)).

The protein belongs to the TRAFAC class myosin-kinesin ATPase superfamily. Myosin family. Interacts (via the two IQ motifs) with calmodulin. Binds an additional calmodulin chain via a third, C-terminal region. Interacts with F-actin.

The protein localises to the cytoplasm. Its subcellular location is the perikaryon. The protein resides in the cell projection. It is found in the dendrite. It localises to the early endosome. The protein localises to the cell cortex. Unconventional myosin that functions as actin-based motor protein with ATPase activity. Plays a role in endosomal protein trafficking, and especially in the transfer of cargo proteins from early to recycling endosomes. Required for normal planar cell polarity in ciliated tracheal cells, for normal rotational polarity of cilia, and for coordinated, unidirectional ciliary movement in the trachea. Required for normal, polarized cilia organization in brain ependymal epithelial cells. In Bos taurus (Bovine), this protein is Unconventional myosin-Id (MYO1D).